Consider the following 1070-residue polypeptide: Alpha-glucosidase (1070 aa).

Residues 1–35 (MRSIKAASLTPLLAALFTTLSSTLALPSSVWEHQL) form the signal peptide. Residues N48, N99, N144, N161, N208, N384, N458, N480, and N513 are each glycosylated (N-linked (GlcNAc...) asparagine). The active-site Nucleophile is the D526. E529 is a catalytic residue. Residues N544, N566, N574, N578, and N635 are each glycosylated (N-linked (GlcNAc...) asparagine). D730 functions as the Proton donor in the catalytic mechanism. N-linked (GlcNAc...) asparagine glycosylation is found at N818, N885, N916, N983, N992, N996, N1008, N1029, N1043, and N1052.

This sequence belongs to the glycosyl hydrolase 31 family.

The enzyme catalyses Hydrolysis of terminal, non-reducing (1-&gt;4)-linked alpha-D-glucose residues with release of alpha-D-glucose.. Its function is as follows. Hydrolyzes a broad range of alpha-D-linked glucopyranosides, including maltose (alpha-1,4), sucrose (alpha-1,2), isomaltose (alpha-1,6) and turanose (alpha-1,3). The sequence is that of Alpha-glucosidase from Candida tsukubaensis (Yeast).